Here is a 355-residue protein sequence, read N- to C-terminus: 3-isopropylmalate dehydrogenase (355 aa).

Positions 90, 100, 128, and 222 each coordinate substrate. Residues Asp-222, Asp-246, and Asp-250 each coordinate Mg(2+). 280 to 292 (GSAPDIAGKGIAN) contacts NAD(+).

The protein belongs to the isocitrate and isopropylmalate dehydrogenases family. LeuB type 1 subfamily. In terms of assembly, homodimer. Mg(2+) serves as cofactor. Requires Mn(2+) as cofactor.

It is found in the cytoplasm. It carries out the reaction (2R,3S)-3-isopropylmalate + NAD(+) = 4-methyl-2-oxopentanoate + CO2 + NADH. The protein operates within amino-acid biosynthesis; L-leucine biosynthesis; L-leucine from 3-methyl-2-oxobutanoate: step 3/4. Its function is as follows. Catalyzes the oxidation of 3-carboxy-2-hydroxy-4-methylpentanoate (3-isopropylmalate) to 3-carboxy-4-methyl-2-oxopentanoate. The product decarboxylates to 4-methyl-2 oxopentanoate. This Burkholderia lata (strain ATCC 17760 / DSM 23089 / LMG 22485 / NCIMB 9086 / R18194 / 383) protein is 3-isopropylmalate dehydrogenase.